An 822-amino-acid chain; its full sequence is Endonuclease MutS2 (822 aa).

348–355 (GPNTGGKT) is an ATP binding site. Residues 707 to 737 (SLNGKKVEPPPKSEPVPKKVKAEPPATEAKS) are disordered. A compositionally biased stretch (basic and acidic residues) spans 709–728 (NGKKVEPPPKSEPVPKKVKA). One can recognise a Smr domain in the interval 749-822 (LDCRGDRLER…GAGVTIAYLR (74 aa)).

It belongs to the DNA mismatch repair MutS family. MutS2 subfamily. As to quaternary structure, homodimer. Binds to stalled ribosomes, contacting rRNA.

Endonuclease that is involved in the suppression of homologous recombination and thus may have a key role in the control of bacterial genetic diversity. Its function is as follows. Acts as a ribosome collision sensor, splitting the ribosome into its 2 subunits. Detects stalled/collided 70S ribosomes which it binds and splits by an ATP-hydrolysis driven conformational change. Acts upstream of the ribosome quality control system (RQC), a ribosome-associated complex that mediates the extraction of incompletely synthesized nascent chains from stalled ribosomes and their subsequent degradation. Probably generates substrates for RQC. The chain is Endonuclease MutS2 from Synechocystis sp. (strain ATCC 27184 / PCC 6803 / Kazusa).